We begin with the raw amino-acid sequence, 396 residues long: Elongation factor Tu 1 (396 aa).

The tr-type G domain occupies 10-206 (KPHINVGTIG…VLDSYIPEPQ (197 aa)). Positions 19 to 26 (GHVDHGKT) are G1. A GTP-binding site is contributed by 19-26 (GHVDHGKT). Residue threonine 26 participates in Mg(2+) binding. The segment at 60-64 (GITIN) is G2. The segment at 81 to 84 (DCPG) is G3. Residues 81–85 (DCPGH) and 136–139 (NKAD) each bind GTP. The G4 stretch occupies residues 136 to 139 (NKAD). The segment at 174 to 176 (SAL) is G5.

The protein belongs to the TRAFAC class translation factor GTPase superfamily. Classic translation factor GTPase family. EF-Tu/EF-1A subfamily. As to quaternary structure, monomer.

The protein localises to the cytoplasm. The enzyme catalyses GTP + H2O = GDP + phosphate + H(+). GTP hydrolase that promotes the GTP-dependent binding of aminoacyl-tRNA to the A-site of ribosomes during protein biosynthesis. The protein is Elongation factor Tu 1 of Nitrosomonas eutropha (strain DSM 101675 / C91 / Nm57).